A 262-amino-acid chain; its full sequence is Thiazole synthase (262 aa).

Lys104 serves as the catalytic Schiff-base intermediate with DXP. 1-deoxy-D-xylulose 5-phosphate-binding positions include Gly165, 191-192, and 213-214; these read AG and NT.

The protein belongs to the ThiG family. As to quaternary structure, homotetramer. Forms heterodimers with either ThiH or ThiS.

It localises to the cytoplasm. The enzyme catalyses [ThiS sulfur-carrier protein]-C-terminal-Gly-aminoethanethioate + 2-iminoacetate + 1-deoxy-D-xylulose 5-phosphate = [ThiS sulfur-carrier protein]-C-terminal Gly-Gly + 2-[(2R,5Z)-2-carboxy-4-methylthiazol-5(2H)-ylidene]ethyl phosphate + 2 H2O + H(+). It functions in the pathway cofactor biosynthesis; thiamine diphosphate biosynthesis. Catalyzes the rearrangement of 1-deoxy-D-xylulose 5-phosphate (DXP) to produce the thiazole phosphate moiety of thiamine. Sulfur is provided by the thiocarboxylate moiety of the carrier protein ThiS. In vitro, sulfur can be provided by H(2)S. This chain is Thiazole synthase, found in Alkalilimnicola ehrlichii (strain ATCC BAA-1101 / DSM 17681 / MLHE-1).